Here is a 256-residue protein sequence, read N- to C-terminus: Phosphatidylglycerol--prolipoprotein diacylglyceryl transferase (256 aa).

A run of 3 helical transmembrane segments spans residues 19-39 (VHWY…LGYW), 56-76 (LIFY…MLFY), and 91-111 (IWEG…AAWL). Arginine 139 provides a ligand contact to a 1,2-diacyl-sn-glycero-3-phospho-(1'-sn-glycerol). The helical transmembrane segment at 231-251 (FGWLTMGQVLSIPMLLIGIWL) threads the bilayer.

This sequence belongs to the Lgt family.

The protein resides in the cell inner membrane. It catalyses the reaction L-cysteinyl-[prolipoprotein] + a 1,2-diacyl-sn-glycero-3-phospho-(1'-sn-glycerol) = an S-1,2-diacyl-sn-glyceryl-L-cysteinyl-[prolipoprotein] + sn-glycerol 1-phosphate + H(+). It functions in the pathway protein modification; lipoprotein biosynthesis (diacylglyceryl transfer). In terms of biological role, catalyzes the transfer of the diacylglyceryl group from phosphatidylglycerol to the sulfhydryl group of the N-terminal cysteine of a prolipoprotein, the first step in the formation of mature lipoproteins. The polypeptide is Phosphatidylglycerol--prolipoprotein diacylglyceryl transferase (Legionella pneumophila subsp. pneumophila (strain Philadelphia 1 / ATCC 33152 / DSM 7513)).